Here is a 393-residue protein sequence, read N- to C-terminus: Formate-dependent phosphoribosylglycinamide formyltransferase (393 aa).

Residues 22 to 23 (EL) and Glu-82 each bind N(1)-(5-phospho-beta-D-ribosyl)glycinamide. Residues Arg-114, Lys-155, 160 to 165 (SSGKGQ), 195 to 198 (EGFI), and Glu-203 each bind ATP. The region spanning 119–308 (RLAAEELGLP…EFALHARAIL (190 aa)) is the ATP-grasp domain. Mg(2+)-binding residues include Glu-267 and Glu-279. Residues Asp-286, Lys-356, and 363–364 (RR) each bind N(1)-(5-phospho-beta-D-ribosyl)glycinamide.

Belongs to the PurK/PurT family. In terms of assembly, homodimer.

It catalyses the reaction N(1)-(5-phospho-beta-D-ribosyl)glycinamide + formate + ATP = N(2)-formyl-N(1)-(5-phospho-beta-D-ribosyl)glycinamide + ADP + phosphate + H(+). The protein operates within purine metabolism; IMP biosynthesis via de novo pathway; N(2)-formyl-N(1)-(5-phospho-D-ribosyl)glycinamide from N(1)-(5-phospho-D-ribosyl)glycinamide (formate route): step 1/1. In terms of biological role, involved in the de novo purine biosynthesis. Catalyzes the transfer of formate to 5-phospho-ribosyl-glycinamide (GAR), producing 5-phospho-ribosyl-N-formylglycinamide (FGAR). Formate is provided by PurU via hydrolysis of 10-formyl-tetrahydrofolate. The protein is Formate-dependent phosphoribosylglycinamide formyltransferase of Azoarcus sp. (strain BH72).